A 342-amino-acid chain; its full sequence is N-acetyl-gamma-glutamyl-phosphate reductase (342 aa).

C147 is an active-site residue.

Belongs to the NAGSA dehydrogenase family. Type 1 subfamily.

The protein localises to the cytoplasm. It carries out the reaction N-acetyl-L-glutamate 5-semialdehyde + phosphate + NADP(+) = N-acetyl-L-glutamyl 5-phosphate + NADPH + H(+). Its pathway is amino-acid biosynthesis; L-arginine biosynthesis; N(2)-acetyl-L-ornithine from L-glutamate: step 3/4. In terms of biological role, catalyzes the NADPH-dependent reduction of N-acetyl-5-glutamyl phosphate to yield N-acetyl-L-glutamate 5-semialdehyde. The protein is N-acetyl-gamma-glutamyl-phosphate reductase of Campylobacter jejuni subsp. jejuni serotype O:23/36 (strain 81-176).